A 196-amino-acid polypeptide reads, in one-letter code: ATP-dependent Clp protease proteolytic subunit (196 aa).

Serine 98 (nucleophile) is an active-site residue. Histidine 123 is an active-site residue.

This sequence belongs to the peptidase S14 family. Fourteen ClpP subunits assemble into 2 heptameric rings which stack back to back to give a disk-like structure with a central cavity, resembling the structure of eukaryotic proteasomes.

It is found in the cytoplasm. The enzyme catalyses Hydrolysis of proteins to small peptides in the presence of ATP and magnesium. alpha-casein is the usual test substrate. In the absence of ATP, only oligopeptides shorter than five residues are hydrolyzed (such as succinyl-Leu-Tyr-|-NHMec, and Leu-Tyr-Leu-|-Tyr-Trp, in which cleavage of the -Tyr-|-Leu- and -Tyr-|-Trp bonds also occurs).. Its function is as follows. Cleaves peptides in various proteins in a process that requires ATP hydrolysis. Has a chymotrypsin-like activity. Plays a major role in the degradation of misfolded proteins. This chain is ATP-dependent Clp protease proteolytic subunit, found in Anoxybacillus flavithermus (strain DSM 21510 / WK1).